Consider the following 199-residue polypeptide: Protein GrpE (199 aa).

The tract at residues 1-50 (MAKKSTRTTPEDSQASTTDSAATSTASEATQAATSATDDQAEQTTAVDPT) is disordered. Positions 11-46 (EDSQASTTDSAATSTASEATQAATSATDDQAEQTTA) are enriched in low complexity.

This sequence belongs to the GrpE family. As to quaternary structure, homodimer.

The protein localises to the cytoplasm. Its function is as follows. Participates actively in the response to hyperosmotic and heat shock by preventing the aggregation of stress-denatured proteins, in association with DnaK and GrpE. It is the nucleotide exchange factor for DnaK and may function as a thermosensor. Unfolded proteins bind initially to DnaJ; upon interaction with the DnaJ-bound protein, DnaK hydrolyzes its bound ATP, resulting in the formation of a stable complex. GrpE releases ADP from DnaK; ATP binding to DnaK triggers the release of the substrate protein, thus completing the reaction cycle. Several rounds of ATP-dependent interactions between DnaJ, DnaK and GrpE are required for fully efficient folding. The chain is Protein GrpE from Lactiplantibacillus plantarum (strain ATCC BAA-793 / NCIMB 8826 / WCFS1) (Lactobacillus plantarum).